We begin with the raw amino-acid sequence, 195 residues long: ATP-dependent Clp protease proteolytic subunit 1 (195 aa).

Ser96 serves as the catalytic Nucleophile. The active site involves His121.

This sequence belongs to the peptidase S14 family. Fourteen ClpP subunits assemble into 2 heptameric rings which stack back to back to give a disk-like structure with a central cavity, resembling the structure of eukaryotic proteasomes.

Its subcellular location is the cytoplasm. The enzyme catalyses Hydrolysis of proteins to small peptides in the presence of ATP and magnesium. alpha-casein is the usual test substrate. In the absence of ATP, only oligopeptides shorter than five residues are hydrolyzed (such as succinyl-Leu-Tyr-|-NHMec, and Leu-Tyr-Leu-|-Tyr-Trp, in which cleavage of the -Tyr-|-Leu- and -Tyr-|-Trp bonds also occurs).. Cleaves peptides in various proteins in a process that requires ATP hydrolysis. Has a chymotrypsin-like activity. Plays a major role in the degradation of misfolded proteins. The protein is ATP-dependent Clp protease proteolytic subunit 1 of Prochlorococcus marinus (strain MIT 9312).